Consider the following 98-residue polypeptide: Aspartyl/glutamyl-tRNA(Asn/Gln) amidotransferase subunit C (98 aa).

Belongs to the GatC family. In terms of assembly, heterotrimer of A, B and C subunits.

It catalyses the reaction L-glutamyl-tRNA(Gln) + L-glutamine + ATP + H2O = L-glutaminyl-tRNA(Gln) + L-glutamate + ADP + phosphate + H(+). It carries out the reaction L-aspartyl-tRNA(Asn) + L-glutamine + ATP + H2O = L-asparaginyl-tRNA(Asn) + L-glutamate + ADP + phosphate + 2 H(+). Functionally, allows the formation of correctly charged Asn-tRNA(Asn) or Gln-tRNA(Gln) through the transamidation of misacylated Asp-tRNA(Asn) or Glu-tRNA(Gln) in organisms which lack either or both of asparaginyl-tRNA or glutaminyl-tRNA synthetases. The reaction takes place in the presence of glutamine and ATP through an activated phospho-Asp-tRNA(Asn) or phospho-Glu-tRNA(Gln). In Bifidobacterium adolescentis (strain ATCC 15703 / DSM 20083 / NCTC 11814 / E194a), this protein is Aspartyl/glutamyl-tRNA(Asn/Gln) amidotransferase subunit C.